The sequence spans 1503 residues: ATP-binding cassette sub-family C member 6 (1503 aa).

The Extracellular portion of the chain corresponds to Met-1–Phe-31. A glycan (N-linked (GlcNAc...) asparagine) is linked at Asn-15. Residues Leu-32–Leu-52 form a helical membrane-spanning segment. Residues Leu-53–Lys-72 lie on the Cytoplasmic side of the membrane. Residues Met-73–Lys-93 traverse the membrane as a helical segment. Topologically, residues Ile-94–Thr-98 are extracellular. The helical transmembrane segment at Pro-99–Val-119 threads the bilayer. The Cytoplasmic segment spans residues Phe-120–Gln-131. A helical membrane pass occupies residues Ser-132–Thr-149. Residues Asn-150–His-167 are Extracellular-facing. The helical transmembrane segment at Leu-168 to Asp-188 threads the bilayer. Residues Gln-189–Ala-302 are Cytoplasmic-facing. The helical transmembrane segment at Ile-303–Val-323 threads the bilayer. The ABC transmembrane type-1 1 domain occupies Phe-311–Gln-593. Residues Phe-324–Gly-349 lie on the Extracellular side of the membrane. A helical transmembrane segment spans residues Tyr-350–Asn-370. Residues Met-371–Tyr-426 are Cytoplasmic-facing. A helical membrane pass occupies residues Leu-427–Leu-447. At Leu-448 to Pro-450 the chain is on the extracellular side. The helical transmembrane segment at Ser-451 to Lys-471 threads the bilayer. Residues Lys-472–Ser-533 lie on the Cytoplasmic side of the membrane. The chain crosses the membrane as a helical span at residues Val-534–His-554. Over Thr-555–Asn-575 the chain is Extracellular. The chain crosses the membrane as a helical span at residues Ile-576 to Val-596. At Ser-597–Leu-939 the chain is on the cytoplasmic side. The ABC transporter 1 domain occupies Ile-629–Gln-853. An ATP-binding site is contributed by Gly-663–Ser-670. The segment at Ala-854–Pro-919 is disordered. Over residues Arg-881 to Thr-901 the composition is skewed to basic and acidic residues. A helical membrane pass occupies residues Arg-940–Ala-960. An ABC transmembrane type-1 2 domain is found at Cys-947–Asn-1228. The Extracellular segment spans residues Ser-961–Leu-997. Residues Gln-998 to Arg-1018 form a helical membrane-spanning segment. Residues Leu-1019–Asp-1061 lie on the Cytoplasmic side of the membrane. A helical transmembrane segment spans residues Lys-1062–Val-1082. Residue Ala-1083 is a topological domain, extracellular. The helical transmembrane segment at Thr-1084–Leu-1104 threads the bilayer. Topologically, residues Tyr-1105–Val-1175 are cytoplasmic. A helical membrane pass occupies residues Glu-1176–His-1196. Topologically, residues Leu-1197–Ser-1198 are extracellular. Residues Ala-1199–Val-1219 form a helical membrane-spanning segment. At Val-1220–Val-1503 the chain is on the cytoplasmic side. In terms of domain architecture, ABC transporter 2 spans Ile-1265–Glu-1499. Phosphoserine is present on Ser-1286. Residue Gly-1299–Ser-1306 participates in ATP binding.

The protein belongs to the ABC transporter superfamily. ABCC family. Conjugate transporter (TC 3.A.1.208) subfamily. The cofactor is Mg(2+). Post-translationally, glycosylated. Expressed in kidney and liver. Very low expression in other tissues. In testis, localized to peritubular myoid cells, Leydig cells, along the basal membrane of Sertoli cells and moderately in the adluminal compartment of the seminiferous tubules.

The protein localises to the basal cell membrane. It localises to the basolateral cell membrane. Its subcellular location is the endoplasmic reticulum membrane. The catalysed reaction is an S-substituted glutathione(in) + ATP + H2O = an S-substituted glutathione(out) + ADP + phosphate + H(+). It carries out the reaction leukotriene C4(in) + ATP + H2O = leukotriene C4(out) + ADP + phosphate + H(+). Its activity is regulated as follows. LTC4 transport is completely inhibited by 1 mM orthovanadate. In terms of biological role, ATP-dependent transporter of the ATP-binding cassette (ABC) family that actively extrudes physiological compounds, and xenobiotics from cells. Mediates ATP-dependent transport of glutathione conjugates such as leukotriene-c4 (LTC4) and N-ethylmaleimide S-glutathione (NEM-GS) (in vitro), and an anionic cyclopentapeptide endothelin antagonist, BQ-123. May contribute to regulate the transport of organic compounds in testes across the blood-testis-barrier. Does not appear to actively transport drugs outside the cell. Confers low levels of cellular resistance to etoposide, teniposide, anthracyclines and cisplatin. Functionally, mediates the release of nucleoside triphosphates, predominantly ATP, into the circulation, where it is rapidly converted into AMP and the mineralization inhibitor inorganic pyrophosphate (PPi) by the ecto-enzyme ectonucleotide pyrophosphatase phosphodiesterase 1 (ENPP1), therefore playing a role in PPi homeostasis. Inhibits TNF-alpha-mediated apoptosis through blocking one or more caspases. The sequence is that of ATP-binding cassette sub-family C member 6 (ABCC6) from Homo sapiens (Human).